The primary structure comprises 540 residues: Chaperonin GroEL 2 (540 aa).

Residues 29 to 32 (TMGP), Lys50, 86 to 90 (DGTTT), Gly414, and Asp496 each bind ATP.

The protein belongs to the chaperonin (HSP60) family. As to quaternary structure, forms a cylinder of 14 subunits composed of two heptameric rings stacked back-to-back. Interacts with the co-chaperonin GroES.

The protein resides in the cytoplasm. It carries out the reaction ATP + H2O + a folded polypeptide = ADP + phosphate + an unfolded polypeptide.. In terms of biological role, together with its co-chaperonin GroES, plays an essential role in assisting protein folding. The GroEL-GroES system forms a nano-cage that allows encapsulation of the non-native substrate proteins and provides a physical environment optimized to promote and accelerate protein folding. The chain is Chaperonin GroEL 2 from Rhodopirellula baltica (strain DSM 10527 / NCIMB 13988 / SH1).